We begin with the raw amino-acid sequence, 326 residues long: Vitamin B12 import system permease protein BtuC (326 aa).

The next 9 helical transmembrane spans lie at 19-39, 61-81, 88-108, 112-132, 146-166, 184-204, 240-260, 274-294, and 302-322; these read LSVL…LWIL, LAVL…QALF, PGLL…VLLG, LPNW…TLIL, LLAG…AIYF, GGVD…LLWI, GWMV…GLVI, VLLP…DIVA, and ELPI…WLLL.

This sequence belongs to the binding-protein-dependent transport system permease family. FecCD subfamily. As to quaternary structure, the complex is composed of two ATP-binding proteins (BtuD), two transmembrane proteins (BtuC) and a solute-binding protein (BtuF).

The protein localises to the cell inner membrane. In terms of biological role, part of the ABC transporter complex BtuCDF involved in vitamin B12 import. Involved in the translocation of the substrate across the membrane. In Escherichia coli O127:H6 (strain E2348/69 / EPEC), this protein is Vitamin B12 import system permease protein BtuC.